Here is a 235-residue protein sequence, read N- to C-terminus: Probable transglycosylase IsaA (235 aa).

Residues 1-28 (MKKTVIASTLAVSLGIAGYGLSGHEAHA) form the signal peptide. The span at 95–115 (ESSSNQEVSANTQSSNTNVQA) shows a compositional bias: polar residues. A disordered region spans residues 95 to 150 (ESSSNQEVSANTQSSNTNVQAVSAPTSSESRSYSTSTTSYSAPSHNYSSHSSSVRL). The span at 117 to 147 (SAPTSSESRSYSTSTTSYSAPSHNYSSHSSS) shows a compositional bias: low complexity.

The protein belongs to the transglycosylase family. IsaA subfamily.

Its subcellular location is the secreted. Functionally, is able to cleave peptidoglycan. The polypeptide is Probable transglycosylase IsaA (isaA) (Staphylococcus epidermidis (strain ATCC 35984 / DSM 28319 / BCRC 17069 / CCUG 31568 / BM 3577 / RP62A)).